Reading from the N-terminus, the 111-residue chain is Cytochrome c6-like (111 aa).

Residues 1-25 form the signal peptide; it reads MQKFLKLVLVTFLFLISTLTPPANA. Residues C39, C42, H43, and M83 each coordinate heme c.

Belongs to the cytochrome c family. PetJ subfamily. Binds 1 heme c group covalently per subunit.

It is found in the cellular thylakoid lumen. This chain is Cytochrome c6-like, found in Nostoc sp. (strain PCC 7120 / SAG 25.82 / UTEX 2576).